Consider the following 411-residue polypeptide: LL-diaminopimelate aminotransferase (411 aa).

Positions 15 and 42 each coordinate substrate. Pyridoxal 5'-phosphate contacts are provided by residues tyrosine 72, alanine 108–lysine 109, tyrosine 132, asparagine 188, tyrosine 219, and serine 247–serine 249. Positions 109, 132, and 188 each coordinate substrate. Position 250 is an N6-(pyridoxal phosphate)lysine (lysine 250). Arginine 258 and asparagine 293 together coordinate pyridoxal 5'-phosphate. Asparagine 293 and arginine 389 together coordinate substrate.

Belongs to the class-I pyridoxal-phosphate-dependent aminotransferase family. LL-diaminopimelate aminotransferase subfamily. Homodimer. Pyridoxal 5'-phosphate is required as a cofactor.

The catalysed reaction is (2S,6S)-2,6-diaminopimelate + 2-oxoglutarate = (S)-2,3,4,5-tetrahydrodipicolinate + L-glutamate + H2O + H(+). It participates in amino-acid biosynthesis; L-lysine biosynthesis via DAP pathway; LL-2,6-diaminopimelate from (S)-tetrahydrodipicolinate (aminotransferase route): step 1/1. Involved in the synthesis of meso-diaminopimelate (m-DAP or DL-DAP), required for both lysine and peptidoglycan biosynthesis. Catalyzes the direct conversion of tetrahydrodipicolinate to LL-diaminopimelate. The sequence is that of LL-diaminopimelate aminotransferase from Desulfitobacterium hafniense (strain Y51).